The chain runs to 156 residues: Ribosomal RNA large subunit methyltransferase H (156 aa).

Residues Leu72, Gly104, and 123–128 contribute to the S-adenosyl-L-methionine site; that span reads FGAMVW.

The protein belongs to the RNA methyltransferase RlmH family. In terms of assembly, homodimer.

The protein localises to the cytoplasm. The catalysed reaction is pseudouridine(1915) in 23S rRNA + S-adenosyl-L-methionine = N(3)-methylpseudouridine(1915) in 23S rRNA + S-adenosyl-L-homocysteine + H(+). Its function is as follows. Specifically methylates the pseudouridine at position 1915 (m3Psi1915) in 23S rRNA. The protein is Ribosomal RNA large subunit methyltransferase H of Dinoroseobacter shibae (strain DSM 16493 / NCIMB 14021 / DFL 12).